The following is a 281-amino-acid chain: 40S small subunit processome assembly factor 1 (281 aa).

The interval 29–141 (LGETEGETEQ…DEDEPAKNKT (113 aa)) is disordered. Residues Ser67 and Ser75 each carry the phosphoserine modification. Residue Lys172 is modified to N6-acetyllysine. Residues 221–254 (ETDIFKKKKKKGRGQEDRRSKKSAPSILSSGQVG) are disordered. At Ser267 the chain carries Phosphoserine.

Part of the small subunit (SSU) processome, composed of more than 70 proteins and the RNA chaperone small nucleolar RNA (snoRNA) U3.

Its subcellular location is the chromosome. The protein localises to the nucleus. The protein resides in the nucleolus. Part of the small subunit (SSU) processome, first precursor of the small eukaryotic ribosomal subunit. During the assembly of the SSU processome in the nucleolus, many ribosome biogenesis factors, an RNA chaperone and ribosomal proteins associate with the nascent pre-rRNA and work in concert to generate RNA folding, modifications, rearrangements and cleavage as well as targeted degradation of pre-ribosomal RNA by the RNA exosome. Prevents helicase DHX37 to be recruited before post-A1 state. The chain is 40S small subunit processome assembly factor 1 from Mus musculus (Mouse).